Consider the following 912-residue polypeptide: Nonsense-mediated mRNA decay factor SMG8 (912 aa).

A disordered region spans residues 565–630 (EHSNRTPDAS…GEDEDETLEQ (66 aa)). Residues 570–602 (TPDASTHPPMTNENSPHLSGSQKSQDSASNLTF) show a composition bias toward polar residues. Residues 604–614 (MDEKRDEENKS) show a composition bias toward basic and acidic residues.

This sequence belongs to the SMG8 family.

Its function is as follows. Involved in nonsense-mediated decay (NMD) of mRNAs containing premature stop codons. Probable component of kinase complex containing SMG1 and recruited to stalled ribosomes. This is Nonsense-mediated mRNA decay factor SMG8 from Culex quinquefasciatus (Southern house mosquito).